Here is a 581-residue protein sequence, read N- to C-terminus: Protein SPT2 homolog (581 aa).

A compositionally biased stretch (low complexity) spans 26–35; sequence YYSTKYSPPK. Disordered regions lie at residues 26–50 and 145–495; these read YYST…NIQK and QEDK…EYDS. Residues 36–76 are a coiled coil; the sequence is KQSKESKQLSSNIQKFLQKKEAEEAEKKRLERQKLNDLLAK. Positions 162-181 are enriched in basic and acidic residues; sequence SGTKERVKAAITREREEAKG. Composition is skewed to polar residues over residues 182-197 and 204-213; these read NTRQ…SSAT and VARSYSTSKT. Composition is skewed to basic and acidic residues over residues 218 to 236 and 256 to 312; these read NAEK…EQRR and LAEK…KETP. Residues 276-307 are a coiled coil; sequence ERLLSAREKRELEERQRQQEQRAQRLKMRESE. Low complexity predominate over residues 352–376; the sequence is SSASSTSLSSSNSHSSASRSSVSSS. A compositionally biased stretch (polar residues) spans 447-461; that stretch reads TRQTPSSDVQRSQGG. The segment covering 486-495 has biased composition (acidic residues); that stretch reads DDDDEDEYDS.

Belongs to the SPT2 family.

In Drosophila melanogaster (Fruit fly), this protein is Protein SPT2 homolog.